Reading from the N-terminus, the 117-residue chain is Small ribosomal subunit protein uS13 (117 aa).

Positions 94-117 (SLPLRGQRTKTNARTRKGPRRLIK) are disordered.

It belongs to the universal ribosomal protein uS13 family. In terms of assembly, part of the 30S ribosomal subunit. Forms a loose heterodimer with protein S19. Forms two bridges to the 50S subunit in the 70S ribosome.

In terms of biological role, located at the top of the head of the 30S subunit, it contacts several helices of the 16S rRNA. In the 70S ribosome it contacts the 23S rRNA (bridge B1a) and protein L5 of the 50S subunit (bridge B1b), connecting the 2 subunits; these bridges are implicated in subunit movement. Contacts the tRNAs in the A and P-sites. This chain is Small ribosomal subunit protein uS13, found in Vesicomyosocius okutanii subsp. Calyptogena okutanii (strain HA).